A 378-amino-acid chain; its full sequence is S-adenosylmethionine:tRNA ribosyltransferase-isomerase (378 aa).

This sequence belongs to the QueA family. Monomer.

Its subcellular location is the cytoplasm. The enzyme catalyses 7-aminomethyl-7-carbaguanosine(34) in tRNA + S-adenosyl-L-methionine = epoxyqueuosine(34) in tRNA + adenine + L-methionine + 2 H(+). The protein operates within tRNA modification; tRNA-queuosine biosynthesis. Its function is as follows. Transfers and isomerizes the ribose moiety from AdoMet to the 7-aminomethyl group of 7-deazaguanine (preQ1-tRNA) to give epoxyqueuosine (oQ-tRNA). The protein is S-adenosylmethionine:tRNA ribosyltransferase-isomerase of Prochlorococcus marinus (strain MIT 9312).